The primary structure comprises 101 residues: Urease subunit beta (101 aa).

This sequence belongs to the urease beta subunit family. Heterotrimer of UreA (gamma), UreB (beta) and UreC (alpha) subunits. Three heterotrimers associate to form the active enzyme.

It localises to the cytoplasm. The enzyme catalyses urea + 2 H2O + H(+) = hydrogencarbonate + 2 NH4(+). It participates in nitrogen metabolism; urea degradation; CO(2) and NH(3) from urea (urease route): step 1/1. The sequence is that of Urease subunit beta from Pseudomonas syringae pv. syringae (strain B728a).